An 864-amino-acid chain; its full sequence is NT-3 growth factor receptor (864 aa).

Residues 1 to 31 (MDVSLCPAKCSFWRIFLLGSVWLDYVGSVLA) form the signal peptide. 2 cysteine pairs are disulfide-bonded: Cys-32-Cys-38 and Cys-36-Cys-45. Residues 32 to 429 (CPANCVCSKT…TVTHKPEEDT (398 aa)) are Extracellular-facing. Asn-68, Asn-72, and Asn-79 each carry an N-linked (GlcNAc...) asparagine glycan. LRR repeat units follow at residues 104 to 125 (GLQK…AFAK) and 128 to 149 (HLRY…LFQT). Asn-133 and Asn-163 each carry an N-linked (GlcNAc...) asparagine glycan. An LRRCT domain is found at 160–209 (NFFNCSCDIRWMQLWQEQGEARLDSQSLYCISADGSQLPLFRMNISQCDL). Intrachain disulfides connect Cys-164/Cys-189 and Cys-166/Cys-207. Residues Asn-203, Asn-218, Asn-232, Asn-259, Asn-267, Asn-272, and Asn-294 are each glycosylated (N-linked (GlcNAc...) asparagine). 2 consecutive Ig-like C2-type domains span residues 210 to 300 (PEIS…VALT) and 309 to 382 (SLVE…IAKN). Cys-231 and Cys-284 are joined by a disulfide. Cys-320 and Cys-362 are joined by a disulfide. N-linked (GlcNAc...) asparagine glycans are attached at residues Asn-375 and Asn-388. Residues 430-453 (FGVSIAVGLAAFACVLLVVLFIMI) form a helical membrane-spanning segment. Residues 454–864 (NKYGRRSKFG…ATPIYLDILG (411 aa)) lie on the Cytoplasmic side of the membrane. Phosphoserine is present on Ser-493. Tyr-516 carries the phosphotyrosine; by autocatalysis modification. Positions 538–853 (IVLKRELGEG…EIYKILHALG (316 aa)) constitute a Protein kinase domain. ATP is bound by residues 544-552 (LGEGAFGKV) and Lys-572. Asp-679 acts as the Proton acceptor in catalysis. 4 positions are modified to phosphotyrosine; by autocatalysis: Tyr-705, Tyr-709, Tyr-710, and Tyr-859.

It belongs to the protein kinase superfamily. Tyr protein kinase family. Insulin receptor subfamily. In terms of assembly, exists in a dynamic equilibrium between monomeric (low affinity) and dimeric (high affinity) structures. Binds SH2B2. Interacts with SQSTM1 and KIDINS220. Interacts with PTPRS. Interacts with MAPK8IP3/JIP3. Ligand-mediated auto-phosphorylation. Widely expressed, mainly in the nervous tissue.

Its subcellular location is the membrane. It carries out the reaction L-tyrosyl-[protein] + ATP = O-phospho-L-tyrosyl-[protein] + ADP + H(+). Receptor tyrosine kinase involved in nervous system and probably heart development. Upon binding of its ligand NTF3/neurotrophin-3, NTRK3 autophosphorylates and activates different signaling pathways, including the phosphatidylinositol 3-kinase/AKT and the MAPK pathways, that control cell survival and differentiation. NTRK3 isoforms containing insertions within the kinase domain can autophosphorylate in response to NTF3/neurotrophin-3, but cannot mediate downstream phenotypic responses. In Rattus norvegicus (Rat), this protein is NT-3 growth factor receptor (Ntrk3).